The following is a 427-amino-acid chain: Serine--tRNA ligase (427 aa).

232–234 (TAE) lines the L-serine pocket. 263–265 (RSE) lines the ATP pocket. E286 is an L-serine binding site. 350–353 (EISS) contributes to the ATP binding site. S385 lines the L-serine pocket.

The protein belongs to the class-II aminoacyl-tRNA synthetase family. Type-1 seryl-tRNA synthetase subfamily. As to quaternary structure, homodimer. The tRNA molecule binds across the dimer.

It is found in the cytoplasm. It catalyses the reaction tRNA(Ser) + L-serine + ATP = L-seryl-tRNA(Ser) + AMP + diphosphate + H(+). The catalysed reaction is tRNA(Sec) + L-serine + ATP = L-seryl-tRNA(Sec) + AMP + diphosphate + H(+). The protein operates within aminoacyl-tRNA biosynthesis; selenocysteinyl-tRNA(Sec) biosynthesis; L-seryl-tRNA(Sec) from L-serine and tRNA(Sec): step 1/1. In terms of biological role, catalyzes the attachment of serine to tRNA(Ser). Is also able to aminoacylate tRNA(Sec) with serine, to form the misacylated tRNA L-seryl-tRNA(Sec), which will be further converted into selenocysteinyl-tRNA(Sec). The protein is Serine--tRNA ligase of Aromatoleum aromaticum (strain DSM 19018 / LMG 30748 / EbN1) (Azoarcus sp. (strain EbN1)).